The chain runs to 412 residues: 2,3-bisphosphoglycerate-independent phosphoglycerate mutase (412 aa).

This sequence belongs to the BPG-independent phosphoglycerate mutase family. A-PGAM subfamily.

The catalysed reaction is (2R)-2-phosphoglycerate = (2R)-3-phosphoglycerate. It functions in the pathway carbohydrate degradation; glycolysis; pyruvate from D-glyceraldehyde 3-phosphate: step 3/5. Catalyzes the interconversion of 2-phosphoglycerate and 3-phosphoglycerate. The protein is 2,3-bisphosphoglycerate-independent phosphoglycerate mutase of Methanobrevibacter smithii (strain ATCC 35061 / DSM 861 / OCM 144 / PS).